Reading from the N-terminus, the 146-residue chain is Hemoglobin subunit beta (146 aa).

In terms of domain architecture, Globin spans 2 to 146; sequence EWTDFERATI…VVNSLGRQYH (145 aa). Residues H63 and H92 each coordinate heme b.

Belongs to the globin family. In terms of assembly, heterotetramer of two alpha chains and two beta chains. Can form polymers. As to expression, red blood cells.

Functionally, involved in oxygen transport from gills to the various peripheral tissues. The sequence is that of Hemoglobin subunit beta (hbb) from Chelidonichthys kumu (Bluefin gurnard).